We begin with the raw amino-acid sequence, 189 residues long: Riboflavin kinase (189 aa).

Positions 42 and 44 each coordinate Mg(2+). The Nucleophile role is filled by Glu124.

Belongs to the flavokinase family. Zn(2+) is required as a cofactor. It depends on Mg(2+) as a cofactor.

It catalyses the reaction riboflavin + ATP = FMN + ADP + H(+). Its pathway is cofactor biosynthesis; FMN biosynthesis; FMN from riboflavin (ATP route): step 1/1. Catalyzes the phosphorylation of riboflavin (vitamin B2) to form flavin mononucleotide (FMN) coenzyme. The polypeptide is Riboflavin kinase (FMN1) (Candida glabrata (strain ATCC 2001 / BCRC 20586 / JCM 3761 / NBRC 0622 / NRRL Y-65 / CBS 138) (Yeast)).